The following is a 652-amino-acid chain: Probable protein phosphatase 2C 19 (652 aa).

A PPM-type phosphatase domain is found at 265-517 (KYVVSSMQGW…DNTTVILVLF (253 aa)). The Mn(2+) site is built by aspartate 300, glycine 301, glutamate 467, and aspartate 508. Positions 524 to 567 (AVPPVDTDTDTDSHTGDDVDNNDPANEVDPTANAGSDDSNTSDE) are disordered.

The protein belongs to the PP2C family. It depends on Mg(2+) as a cofactor. Mn(2+) serves as cofactor.

It carries out the reaction O-phospho-L-seryl-[protein] + H2O = L-seryl-[protein] + phosphate. The enzyme catalyses O-phospho-L-threonyl-[protein] + H2O = L-threonyl-[protein] + phosphate. The chain is Probable protein phosphatase 2C 19 from Oryza sativa subsp. japonica (Rice).